The primary structure comprises 225 residues: Recoverin family protein DDB_G0274781 (225 aa).

The span at 1-13 (MGNKQGKSPNNSK) shows a compositional bias: low complexity. A disordered region spans residues 1–20 (MGNKQGKSPNNSKGGKKYKI). A lipid anchor (N-myristoyl glycine) is attached at Gly2. 3 consecutive EF-hand domains span residues 78-113 (DNSP…LCKG), 114-149 (TAEE…AWIS), and 174-209 (MAQI…HPKI). 15 residues coordinate Ca(2+): Asp91, Asn93, Asp95, Thr97, Glu102, Asp127, Asp129, Asn131, Tyr133, Glu138, Asp187, Asn189, Asp191, Lys193, and Glu198.

The protein belongs to the recoverin family.

The chain is Recoverin family protein DDB_G0274781 from Dictyostelium discoideum (Social amoeba).